The chain runs to 406 residues: Serine/threonine transporter SstT (406 aa).

9 helical membrane passes run 15–35 (LVLQ…VSPS), 47–67 (FVGA…AASI), 81–101 (IIAM…VLSF), 140–160 (ALMS…GLAL), 191–211 (FGIF…ALAG), 215–235 (LLVV…PAMV), 289–309 (IPLG…TLTL), 315–335 (MGIE…AVSA), and 362–382 (IAMQ…SAET).

This sequence belongs to the dicarboxylate/amino acid:cation symporter (DAACS) (TC 2.A.23) family.

The protein localises to the cell inner membrane. The catalysed reaction is L-serine(in) + Na(+)(in) = L-serine(out) + Na(+)(out). It carries out the reaction L-threonine(in) + Na(+)(in) = L-threonine(out) + Na(+)(out). In terms of biological role, involved in the import of serine and threonine into the cell, with the concomitant import of sodium (symport system). In Vibrio vulnificus (strain CMCP6), this protein is Serine/threonine transporter SstT.